Reading from the N-terminus, the 1171-residue chain is DNA polymerase catalytic subunit (1171 aa).

3 disordered regions span residues glycine 647–threonine 687, proline 704–proline 735, and valine 1149–arginine 1171. The span at proline 649–threonine 662 shows a compositional bias: pro residues. 2 stretches are compositionally biased toward low complexity: residues proline 663–glycine 674 and valine 709–threonine 725. Basic and acidic residues predominate over residues valine 1149–arginine 1158.

The protein belongs to the DNA polymerase type-B family.

The protein resides in the host nucleus. It carries out the reaction DNA(n) + a 2'-deoxyribonucleoside 5'-triphosphate = DNA(n+1) + diphosphate. This chain is DNA polymerase catalytic subunit (DPOL), found in Tupaia belangeri (Common tree shrew).